Here is an 830-residue protein sequence, read N- to C-terminus: Isethionate sulfite-lyase (830 aa).

The 670-residue stretch at K31–V700 folds into the PFL domain. 2-hydroxyethane-1-sulfonate-binding positions include R189, Q193, C468–E470, and R678. The active-site Cysteine radical intermediate is the C468. E470 functions as the Proton acceptor in the catalytic mechanism. In terms of domain architecture, Glycine radical spans D707–M830. At G805 the chain carries Glycine radical.

This sequence belongs to the glycyl radical enzyme (GRE) family. As to quaternary structure, homodimer. Post-translationally, requires the activating protein IslB to generate the key active site glycyl radical on Gly-805 that is involved in catalysis.

The catalysed reaction is 2-hydroxyethane-1-sulfonate = acetaldehyde + sulfite + H(+). Its pathway is organosulfur degradation; alkanesulfonate degradation. Its function is as follows. Involved in an anaerobic respiration pathway that converts the sulfonate taurine (2-aminoethanesulfonate) to ammonia, acetate and sulfide. Catalyzes the radical-mediated C-S bond cleavage of isethionate (2-hydroxyethanesulfonate) to form sulfite and acetaldehyde. Is not able to use any alternate organosulfonate or (S)-1,2-propanediol or choline as a substrate, showing that this enzyme is highly specific for isethionate. This is Isethionate sulfite-lyase from Bilophila wadsworthia (strain 3_1_6).